Reading from the N-terminus, the 316-residue chain is 4-hydroxy-3-methylbut-2-enyl diphosphate reductase (316 aa).

[4Fe-4S] cluster is bound at residue cysteine 12. (2E)-4-hydroxy-3-methylbut-2-enyl diphosphate contacts are provided by histidine 41 and histidine 74. Positions 41 and 74 each coordinate dimethylallyl diphosphate. Histidine 41 and histidine 74 together coordinate isopentenyl diphosphate. Residue cysteine 96 participates in [4Fe-4S] cluster binding. A (2E)-4-hydroxy-3-methylbut-2-enyl diphosphate-binding site is contributed by histidine 124. Histidine 124 is a dimethylallyl diphosphate binding site. Histidine 124 contacts isopentenyl diphosphate. Glutamate 126 functions as the Proton donor in the catalytic mechanism. Threonine 167 contributes to the (2E)-4-hydroxy-3-methylbut-2-enyl diphosphate binding site. Cysteine 197 contributes to the [4Fe-4S] cluster binding site. (2E)-4-hydroxy-3-methylbut-2-enyl diphosphate is bound by residues serine 225, serine 226, asparagine 227, and serine 269. Positions 225, 226, 227, and 269 each coordinate dimethylallyl diphosphate. Positions 225, 226, 227, and 269 each coordinate isopentenyl diphosphate.

Belongs to the IspH family. Homodimer. [4Fe-4S] cluster serves as cofactor.

The catalysed reaction is isopentenyl diphosphate + 2 oxidized [2Fe-2S]-[ferredoxin] + H2O = (2E)-4-hydroxy-3-methylbut-2-enyl diphosphate + 2 reduced [2Fe-2S]-[ferredoxin] + 2 H(+). It catalyses the reaction dimethylallyl diphosphate + 2 oxidized [2Fe-2S]-[ferredoxin] + H2O = (2E)-4-hydroxy-3-methylbut-2-enyl diphosphate + 2 reduced [2Fe-2S]-[ferredoxin] + 2 H(+). Its pathway is isoprenoid biosynthesis; dimethylallyl diphosphate biosynthesis; dimethylallyl diphosphate from (2E)-4-hydroxy-3-methylbutenyl diphosphate: step 1/1. It functions in the pathway isoprenoid biosynthesis; isopentenyl diphosphate biosynthesis via DXP pathway; isopentenyl diphosphate from 1-deoxy-D-xylulose 5-phosphate: step 6/6. Catalyzes the conversion of 1-hydroxy-2-methyl-2-(E)-butenyl 4-diphosphate (HMBPP) into a mixture of isopentenyl diphosphate (IPP) and dimethylallyl diphosphate (DMAPP). Acts in the terminal step of the DOXP/MEP pathway for isoprenoid precursor biosynthesis. This chain is 4-hydroxy-3-methylbut-2-enyl diphosphate reductase, found in Cronobacter sakazakii (strain ATCC BAA-894) (Enterobacter sakazakii).